We begin with the raw amino-acid sequence, 273 residues long: Large ribosomal subunit protein uL2cz/uL2cy (273 aa).

Disordered stretches follow at residues 1–23 (MAIH…SQVK) and 223–273 (NPVD…RRSK).

The protein belongs to the universal ribosomal protein uL2 family. In terms of assembly, part of the 50S ribosomal subunit.

Its subcellular location is the plastid. It is found in the chloroplast. The polypeptide is Large ribosomal subunit protein uL2cz/uL2cy (rpl2-A) (Oenothera argillicola (Appalachian evening primrose)).